The following is a 232-amino-acid chain: 2-C-methyl-D-erythritol 4-phosphate cytidylyltransferase (232 aa).

Belongs to the IspD/TarI cytidylyltransferase family. IspD subfamily.

The enzyme catalyses 2-C-methyl-D-erythritol 4-phosphate + CTP + H(+) = 4-CDP-2-C-methyl-D-erythritol + diphosphate. It participates in isoprenoid biosynthesis; isopentenyl diphosphate biosynthesis via DXP pathway; isopentenyl diphosphate from 1-deoxy-D-xylulose 5-phosphate: step 2/6. Catalyzes the formation of 4-diphosphocytidyl-2-C-methyl-D-erythritol from CTP and 2-C-methyl-D-erythritol 4-phosphate (MEP). The chain is 2-C-methyl-D-erythritol 4-phosphate cytidylyltransferase from Neorickettsia sennetsu (strain ATCC VR-367 / Miyayama) (Ehrlichia sennetsu).